The following is an 824-amino-acid chain: MSDTDGKKTLGLRGGAPRPGNVKQSFSHGRTKNVVVETKRKRVVVPKAGATTSAGGKAPIGDPSRRPAGISDAEMERRLKAVKAAKAREAEEEAARIAEEKARAEERERRRAEQEERERAEREREESLKAKAEEDKRRKDEAEAAAKAAAAPAAEPVVQRPAAKAAPEPAPRKQQDRDRDNKRGGKGNDDSRRSGKLTLNQALAGGEGGRQRSMAAMKRKQERARQKAMGGQVEREKVVRDVQVPEAIVVSELANRMSEKVGEVVKALMNNGMMVTQNQAIDADTAELIVQEFGHRIVRVSDADVEDVIKEVEDDEADLKTRPPVVTIMGHVDHGKTSLLDAIRKAKVVAGEAGGITQHIGAYQVKTDSGQLLSFLDTPGHAAFTSMRSRGAQVTDIVVLVVAADDAVMPQTIEAINHAKAAEVPMIVAINKIDRPAADPTKVRTDLLQHEVIVEQMSGDVQDVEVSAITGQGLDDLLEAIALQAEILELKANPNRAAQGAVIEAQLDVGRGPVATVLVQNGTLRQGDIFVVGEQYGKVRALINDQGERVKEAGPSVPVEVLGLNGTPEAGDVLNVTSTEAQAREIASYRANAAKDKRAAAGAATTLEQLMANAKADEDVSELPILVKADVQGSAEAIVQAMEKIGNDEVRVRVLHSGVGAITETDVGLAEASGAPIMGFNVRANASARNTANQKGVELRYYSIIYDLVDDVKAAASGLLSAEIRENFIGYATIKEVFKVTGVGKVAGCLVTEGVARRSAGVRLLRDNVVIHEGTLKTLKRFKDEVAEVQSGQECGMAFENYDDIRADDVIEIFEREEITRTLT.

2 disordered regions span residues 1 to 32 (MSDT…GRTK) and 45 to 232 (VPKA…MGGQ). The segment covering 45 to 57 (VPKAGATTSAGGK) has biased composition (low complexity). Positions 86–144 (KAREAEEEAARIAEEKARAEERERRRAEQEERERAEREREESLKAKAEEDKRRKDEAEA) are enriched in basic and acidic residues. The span at 145–167 (AAKAAAAPAAEPVVQRPAAKAAP) shows a compositional bias: low complexity. Over residues 170–193 (APRKQQDRDRDNKRGGKGNDDSRR) the composition is skewed to basic and acidic residues. The region spanning 321 to 489 (TRPPVVTIMG…AIALQAEILE (169 aa)) is the tr-type G domain. Positions 330 to 337 (GHVDHGKT) are G1. 330-337 (GHVDHGKT) serves as a coordination point for GTP. Residues 355 to 359 (GITQH) are G2. The interval 377-380 (DTPG) is G3. GTP is bound by residues 377–381 (DTPGH) and 431–434 (NKID). A G4 region spans residues 431-434 (NKID). Positions 467–469 (SAI) are G5.

Belongs to the TRAFAC class translation factor GTPase superfamily. Classic translation factor GTPase family. IF-2 subfamily.

The protein resides in the cytoplasm. Its function is as follows. One of the essential components for the initiation of protein synthesis. Protects formylmethionyl-tRNA from spontaneous hydrolysis and promotes its binding to the 30S ribosomal subunits. Also involved in the hydrolysis of GTP during the formation of the 70S ribosomal complex. In Roseobacter denitrificans (strain ATCC 33942 / OCh 114) (Erythrobacter sp. (strain OCh 114)), this protein is Translation initiation factor IF-2.